We begin with the raw amino-acid sequence, 316 residues long: MQGNFSKKIDPMSNLPFTVAALYCFAPLPQYESLREPLAQLCCANGIKGTLLLAAEGINGTVAGSAGAIEKLIAHITAIPGLGEPELKYSHASEMPFHRMKVRLKREIVTMGVEGIDPLKSVGTYIAPKDWNALIADENTVVVDKRNDYEYAIGTFEGAIDPQTRTFREFPEWVKQNRDRLEGKKIAMFCTGGIRCEKATAFVKGLGFDDVYHLKGGILKYLEEVPREQSMWNGECFVFDERVAVGHGLAESDVELCRACRRPLTPQDKLSQFFEEGVSCAGCYAERTPEDRARYAERQKQVKLAEKRGANKHIGS.

The 95-residue stretch at 136 to 230 (ADENTVVVDK…YLEEVPREQS (95 aa)) folds into the Rhodanese domain. C190 functions as the Cysteine persulfide intermediate in the catalytic mechanism.

It belongs to the TrhO family.

It catalyses the reaction uridine(34) in tRNA + AH2 + O2 = 5-hydroxyuridine(34) in tRNA + A + H2O. Its function is as follows. Catalyzes oxygen-dependent 5-hydroxyuridine (ho5U) modification at position 34 in tRNAs. The sequence is that of tRNA uridine(34) hydroxylase from Brucella abortus (strain 2308).